Reading from the N-terminus, the 161-residue chain is MEFNEEFYVALGFVIFVAILLYYGVHNKLNAALDKRADRIREDLAHAVRLREEAAALLASFEKRKAEAEAEAEALVAQARTEAEMIAKEAHERLAEFVQRRTQQAENKIANAEAQAMAEVKAIAADAATKAAEILLTDAAKGAYGQKLIDQGIDGLKAAAH.

Residues 6-26 form a helical membrane-spanning segment; it reads EFYVALGFVIFVAILLYYGVH.

The protein belongs to the ATPase B chain family. F-type ATPases have 2 components, F(1) - the catalytic core - and F(0) - the membrane proton channel. F(1) has five subunits: alpha(3), beta(3), gamma(1), delta(1), epsilon(1). F(0) has three main subunits: a(1), b(2) and c(10-14). The alpha and beta chains form an alternating ring which encloses part of the gamma chain. F(1) is attached to F(0) by a central stalk formed by the gamma and epsilon chains, while a peripheral stalk is formed by the delta and b chains.

It is found in the cell inner membrane. F(1)F(0) ATP synthase produces ATP from ADP in the presence of a proton or sodium gradient. F-type ATPases consist of two structural domains, F(1) containing the extramembraneous catalytic core and F(0) containing the membrane proton channel, linked together by a central stalk and a peripheral stalk. During catalysis, ATP synthesis in the catalytic domain of F(1) is coupled via a rotary mechanism of the central stalk subunits to proton translocation. Functionally, component of the F(0) channel, it forms part of the peripheral stalk, linking F(1) to F(0). The protein is ATP synthase subunit b 1 of Beijerinckia indica subsp. indica (strain ATCC 9039 / DSM 1715 / NCIMB 8712).